Here is a 720-residue protein sequence, read N- to C-terminus: Calpain-12 (720 aa).

A Calpain catalytic domain is found at 45 to 341 (LFRDPCFPAG…FNTVQICSLS (297 aa)). Residues Cys-105, His-259, and Asn-283 contribute to the active site. Residues 342-541 (PEVLGPSPAG…DDVISADLDA (200 aa)) are domain III. Residues 393-403 (DEEEDDDDEEG) show a composition bias toward acidic residues. Positions 393–415 (DEEEDDDDEEGPWGGWGAAGARG) are disordered. Residues 542–720 (LQAPYKPLEL…KQWSEVATFS (179 aa)) form a domain IV region. An EF-hand domain is found at 621–656 (GHLMSWQATFDKFDEDASGTMNSCELRLALTAAGFH). Asp-634, Asp-636, Ser-638, Thr-640, and Glu-645 together coordinate Ca(2+).

It belongs to the peptidase C2 family. As to expression, expression localized to the cortex of the hair follicle during the anagen phase of hair cycle.

Its function is as follows. Calcium-regulated non-lysosomal thiol-protease. This chain is Calpain-12 (Capn12), found in Mus musculus (Mouse).